Reading from the N-terminus, the 325-residue chain is tRNA dimethylallyltransferase (325 aa).

Gly-21–Ser-28 provides a ligand contact to ATP. Residue Thr-23 to Ser-28 coordinates substrate. Residues Gln-166–Arg-170 form an interaction with substrate tRNA region.

This sequence belongs to the IPP transferase family. Monomer. Mg(2+) is required as a cofactor.

It catalyses the reaction adenosine(37) in tRNA + dimethylallyl diphosphate = N(6)-dimethylallyladenosine(37) in tRNA + diphosphate. Functionally, catalyzes the transfer of a dimethylallyl group onto the adenine at position 37 in tRNAs that read codons beginning with uridine, leading to the formation of N6-(dimethylallyl)adenosine (i(6)A). This Acidiphilium cryptum (strain JF-5) protein is tRNA dimethylallyltransferase.